We begin with the raw amino-acid sequence, 491 residues long: ATP synthase subunit beta, chloroplastic (491 aa).

163-170 (GGAGVGKT) contacts ATP.

This sequence belongs to the ATPase alpha/beta chains family. In terms of assembly, F-type ATPases have 2 components, CF(1) - the catalytic core - and CF(0) - the membrane proton channel. CF(1) has five subunits: alpha(3), beta(3), gamma(1), delta(1), epsilon(1). CF(0) has four main subunits: a(1), b(1), b'(1) and c(9-12).

Its subcellular location is the plastid. It is found in the chloroplast thylakoid membrane. It carries out the reaction ATP + H2O + 4 H(+)(in) = ADP + phosphate + 5 H(+)(out). In terms of biological role, produces ATP from ADP in the presence of a proton gradient across the membrane. The catalytic sites are hosted primarily by the beta subunits. The protein is ATP synthase subunit beta, chloroplastic of Nephroselmis olivacea (Green alga).